A 97-amino-acid chain; its full sequence is YcgL domain-containing protein PA14_47450 (97 aa).

The 85-residue stretch at 3–87 folds into the YcgL domain; the sequence is RICSVYKSPR…GEEEYIEHLP (85 aa).

The polypeptide is YcgL domain-containing protein PA14_47450 (Pseudomonas aeruginosa (strain UCBPP-PA14)).